We begin with the raw amino-acid sequence, 612 residues long: FAD-linked oxidoreductase easE (612 aa).

The FAD-binding PCMH-type domain occupies 129–313 (HQGRIPLYSA…TRATMRVFPD (185 aa)).

Belongs to the oxygen-dependent FAD-linked oxidoreductase family. Requires FAD as cofactor.

It participates in alkaloid biosynthesis; ergot alkaloid biosynthesis. Its function is as follows. FAD-linked oxidoreductase; part of the gene cluster that mediates the biosynthesis of fungal ergot alkaloid. DmaW catalyzes the first step of ergot alkaloid biosynthesis by condensing dimethylallyl diphosphate (DMAP) and tryptophan to form 4-dimethylallyl-L-tryptophan. The second step is catalyzed by the methyltransferase easF that methylates 4-dimethylallyl-L-tryptophan in the presence of S-adenosyl-L-methionine, resulting in the formation of 4-dimethylallyl-L-abrine. The catalase easC and the FAD-dependent oxidoreductase easE then transform 4-dimethylallyl-L-abrine to chanoclavine-I which is further oxidized by easD in the presence of NAD(+), resulting in the formation of chanoclavine-I aldehyde. Chanoclavine-I aldehyde is the precursor of ergoamides and ergopeptines in Clavicipitaceae, and clavine-type alcaloids such as fumiclavine in Trichocomaceae. However, the metabolites downstream of chanoclavine-I aldehyde in Arthrodermataceae have not been identified yet. The chain is FAD-linked oxidoreductase easE from Arthroderma otae (strain ATCC MYA-4605 / CBS 113480) (Microsporum canis).